Here is a 339-residue protein sequence, read N- to C-terminus: Transcription initiation factor IIB (339 aa).

The segment at E39–Q70 adopts a TFIIB-type zinc-finger fold. Residues C43, C46, C62, and C65 each coordinate Zn(2+). Tandem repeats lie at residues S156–L239 and D250–E331.

It belongs to the TFIIB family.

Its function is as follows. Stabilizes TBP binding to an archaeal box-A promoter. Also responsible for recruiting RNA polymerase II to the pre-initiation complex (DNA-TBP-TFIIB). This Methanothermococcus thermolithotrophicus (Methanococcus thermolithotrophicus) protein is Transcription initiation factor IIB.